Consider the following 180-residue polypeptide: Ribosome rescue factor SmrB (180 aa).

The Smr domain occupies 98-173 (LDLHGLTQLQ…GNAALLVLVA (76 aa)).

This sequence belongs to the SmrB family. In terms of assembly, associates with collided ribosomes, but not with correctly translating polysomes.

Acts as a ribosome collision sensor. Detects stalled/collided disomes (pairs of ribosomes where the leading ribosome is stalled and a second ribosome has collided with it) and endonucleolytically cleaves mRNA at the 5' boundary of the stalled ribosome. Stalled/collided disomes form a new interface (primarily via the 30S subunits) that binds SmrB. Cleaved mRNA becomes available for tmRNA ligation, leading to ribosomal subunit dissociation and rescue of stalled ribosomes. This is Ribosome rescue factor SmrB from Pectobacterium atrosepticum (strain SCRI 1043 / ATCC BAA-672) (Erwinia carotovora subsp. atroseptica).